The following is a 255-amino-acid chain: Protein BEAN1 (255 aa).

The helical transmembrane segment at 37-57 (VLVASAVIGVVITLSCITIIV) threads the bilayer. The segment covering 69-90 (QRHHHRHRRHHHHHRHRRRRHR) has biased composition (basic residues). 2 disordered regions span residues 69-109 (QRHH…MPYA) and 160-255 (DAPP…ERIV). Positions 193 to 206 (QRTQGQSRLHTVSM) are enriched in polar residues. Over residues 217 to 226 (GTGSPSDLLP) the composition is skewed to low complexity. Polar residues predominate over residues 234 to 243 (PSNSQGSPIP). Over residues 244 to 255 (TQAPMPSPERIV) the composition is skewed to pro residues.

Interacts with NEDD4.

The protein resides in the membrane. This is Protein BEAN1 (Bean1) from Mus musculus (Mouse).